A 499-amino-acid chain; its full sequence is Glycerol kinase (499 aa).

Residue Thr-13 participates in ADP binding. Residues Thr-13, Thr-14, and Ser-15 each coordinate ATP. Residue Thr-13 coordinates sn-glycerol 3-phosphate. Arg-17 provides a ligand contact to ADP. Sn-glycerol 3-phosphate contacts are provided by Arg-83, Glu-84, Tyr-135, and Asp-245. Glycerol is bound by residues Arg-83, Glu-84, Tyr-135, Asp-245, and Gln-246. ADP contacts are provided by Thr-267 and Gly-310. 4 residues coordinate ATP: Thr-267, Gly-310, Gln-314, and Gly-411. ADP contacts are provided by Gly-411 and Asn-415.

This sequence belongs to the FGGY kinase family.

It catalyses the reaction glycerol + ATP = sn-glycerol 3-phosphate + ADP + H(+). It functions in the pathway polyol metabolism; glycerol degradation via glycerol kinase pathway; sn-glycerol 3-phosphate from glycerol: step 1/1. With respect to regulation, inhibited by fructose 1,6-bisphosphate (FBP). Functionally, key enzyme in the regulation of glycerol uptake and metabolism. Catalyzes the phosphorylation of glycerol to yield sn-glycerol 3-phosphate. The protein is Glycerol kinase of Xanthomonas axonopodis pv. citri (strain 306).